Consider the following 470-residue polypeptide: Poly(A) polymerase catalytic subunit (470 aa).

Active-site residues include Asp192 and Asp194.

This sequence belongs to the poxviridae poly(A) polymerase catalytic subunit family. Heterodimer of a large (catalytic) subunit and a small (regulatory) subunit.

The catalysed reaction is RNA(n) + ATP = RNA(n)-3'-adenine ribonucleotide + diphosphate. Polymerase that creates the 3'-poly(A) tail of mRNA's. The protein is Poly(A) polymerase catalytic subunit (PAPL) of Molluscum contagiosum virus subtype 1 (MOCV).